The following is a 404-amino-acid chain: Glucose-1-phosphate adenylyltransferase (404 aa).

Alpha-D-glucose 1-phosphate is bound by residues Y99, G164, 179–180 (EK), and S197.

Belongs to the bacterial/plant glucose-1-phosphate adenylyltransferase family.

The catalysed reaction is alpha-D-glucose 1-phosphate + ATP + H(+) = ADP-alpha-D-glucose + diphosphate. It participates in capsule biogenesis; capsule polysaccharide biosynthesis. It functions in the pathway glycan biosynthesis; glycogen biosynthesis. In terms of biological role, involved in the biosynthesis of ADP-glucose, a building block, required in the biosynthesis of maltose-1-phosphate (M1P) and in the elongation reactions to produce linear alpha-1,4-glucans. Catalyzes the reaction between ATP and alpha-D-glucose 1-phosphate (G1P) to produce pyrophosphate and ADP-Glc. The sequence is that of Glucose-1-phosphate adenylyltransferase from Mycobacterium ulcerans (strain Agy99).